The primary structure comprises 378 residues: Quinolinate synthase (378 aa).

2 residues coordinate iminosuccinate: His59 and Ser80. Position 125 (Cys125) interacts with [4Fe-4S] cluster. Residues 151–153 and Ser168 each bind iminosuccinate; that span reads YAN. Cys212 contacts [4Fe-4S] cluster. Residues 238-240 and Thr255 each bind iminosuccinate; that span reads HPE. Cys309 serves as a coordination point for [4Fe-4S] cluster.

It belongs to the quinolinate synthase family. Type 1 subfamily. [4Fe-4S] cluster is required as a cofactor.

It localises to the cytoplasm. The enzyme catalyses iminosuccinate + dihydroxyacetone phosphate = quinolinate + phosphate + 2 H2O + H(+). It functions in the pathway cofactor biosynthesis; NAD(+) biosynthesis; quinolinate from iminoaspartate: step 1/1. In terms of biological role, catalyzes the condensation of iminoaspartate with dihydroxyacetone phosphate to form quinolinate. This is Quinolinate synthase from Burkholderia thailandensis (strain ATCC 700388 / DSM 13276 / CCUG 48851 / CIP 106301 / E264).